The chain runs to 574 residues: Uric acid-xanthine permease (574 aa).

The interval 1–20 (MDNSIHSTDGPDSVIPNSNP) is disordered. 12 consecutive transmembrane segments (helical) span residues 77 to 97 (LLAF…VVTP), 111 to 131 (LQQY…MVQI), 141 to 161 (YYIG…ISVA), 188 to 209 (AYGA…LAFV), 217 to 237 (IFPP…LIGT), 264 to 284 (LPWG…SIIL), 296 to 315 (CSVV…CGYF), 338 to 361 (VYGP…IGDV), 427 to 447 (CCLI…IVAI), 451 to 471 (VMGG…QAIV), 482 to 502 (FILT…TWFG), and 522 to 542 (LVLE…NAIM). The tract at residues 555–574 (MPVSAHDNRDGEAEYQSKQA) is disordered. A Glycyl lysine isopeptide (Lys-Gly) (interchain with G-Cter in ubiquitin) cross-link involves residue Lys572.

This sequence belongs to the nucleobase:cation symporter-2 (NCS2) (TC 2.A.40) family. In terms of processing, ubiquitinated by hulA. Ubiquitination leads to internalization, sorting into the endosomal pathway to the vacuolar lumen where uapA is eventually degraded.

It is found in the cell membrane. In terms of biological role, uric acid-xanthine transporter. The chain is Uric acid-xanthine permease (uapA) from Emericella nidulans (strain FGSC A4 / ATCC 38163 / CBS 112.46 / NRRL 194 / M139) (Aspergillus nidulans).